Here is a 259-residue protein sequence, read N- to C-terminus: Borneol dehydrogenase, mitochondrial (259 aa).

The N-terminal 30 residues, Met-1–Leu-30, are a transit peptide targeting the mitochondrion. NAD(+) contacts are provided by residues Ser-21 to Ile-23, Asp-42, Asp-63 to Val-64, and Asn-90 to Gly-92. The active-site Proton donor is the Ser-144. The substrate site is built by Ser-144 and Tyr-157. Positions 157, 161, and 192 each coordinate NAD(+). Tyr-157 serves as the catalytic Proton acceptor. Catalysis depends on Lys-161, which acts as the Proton donor/acceptor.

It belongs to the short-chain dehydrogenases/reductases (SDR) family. Specifically expressed in glandular trichomes of mature flowers.

Its subcellular location is the mitochondrion. The enzyme catalyses borneol + NAD(+) = camphor + NADH + H(+). Its pathway is secondary metabolite biosynthesis; terpenoid biosynthesis. Involved in the biosynthesis of monoterpenes natural products related to camphor. Catalyzes the conversion of borneol into camphor. This is Borneol dehydrogenase, mitochondrial from Lavandula x intermedia (Lavandin).